A 302-amino-acid chain; its full sequence is Phosphoribosylaminoimidazole-succinocarboxamide synthase (302 aa).

This sequence belongs to the SAICAR synthetase family.

The enzyme catalyses 5-amino-1-(5-phospho-D-ribosyl)imidazole-4-carboxylate + L-aspartate + ATP = (2S)-2-[5-amino-1-(5-phospho-beta-D-ribosyl)imidazole-4-carboxamido]succinate + ADP + phosphate + 2 H(+). It participates in purine metabolism; IMP biosynthesis via de novo pathway; 5-amino-1-(5-phospho-D-ribosyl)imidazole-4-carboxamide from 5-amino-1-(5-phospho-D-ribosyl)imidazole-4-carboxylate: step 1/2. In Cupriavidus necator (strain ATCC 17699 / DSM 428 / KCTC 22496 / NCIMB 10442 / H16 / Stanier 337) (Ralstonia eutropha), this protein is Phosphoribosylaminoimidazole-succinocarboxamide synthase.